A 558-amino-acid polypeptide reads, in one-letter code: MKLRSSAITQGVQRSPNRAMLRAVGFEDDDFNKPIIGIANGYSTITPCNIGLNDLAKQAEKAIKDWDGMPQMFGTITVSDGISMGTEGMKYSLVSREVIADSIETACNAQSMDGVLAIGGCDKNMPGAMLAMARMNIPGIFVYGGTIKPGKLNGEDLTVVSAFEAVGQLTSGKITKEKLIEVEKHCIPGAGSCGGMFTANTMSAAIEAMGLSLPHSSTMAAEDQEKIKSTQKSAEVLIKAIKENIRPLDLLTKQAFENAISVVMAVGGSTNAVLHLLAIAHSSGVELSLDEFEKIRQRVPVLCDLKPSGKYVTVDLHKAGGIPQVMKILLEAGLINENCRTIENKTIKEMLLDVPAEPPSDQDVIRPFDSPVYKKGHLAILKGNLATEGSVAKISGIKEPILTGPAKVFESEEDCLKAILTEQIHSGDVVVIRNEGPVGGPGMREMLAPTSAIVGQGLGEKVALITDGRFSGGTYGLVVGHVAPEAAVGGNIALIQDGDSITVDAIQKLIQVNIEEAELKRRRSLWVKPKPKYNSGVLGKYATLVSSSSKGAVTDQNC.

Position 48 (C48) interacts with [2Fe-2S] cluster. D80 provides a ligand contact to Mg(2+). Residue C121 participates in [2Fe-2S] cluster binding. 2 residues coordinate Mg(2+): D122 and K123. K123 carries the N6-carboxylysine modification. C193 is a [2Fe-2S] cluster binding site. E445 is a binding site for Mg(2+). S471 (proton acceptor) is an active-site residue.

The protein belongs to the IlvD/Edd family. Homodimer. Requires [2Fe-2S] cluster as cofactor. Mg(2+) serves as cofactor.

The catalysed reaction is (2R)-2,3-dihydroxy-3-methylbutanoate = 3-methyl-2-oxobutanoate + H2O. It carries out the reaction (2R,3R)-2,3-dihydroxy-3-methylpentanoate = (S)-3-methyl-2-oxopentanoate + H2O. It participates in amino-acid biosynthesis; L-isoleucine biosynthesis; L-isoleucine from 2-oxobutanoate: step 3/4. Its pathway is amino-acid biosynthesis; L-valine biosynthesis; L-valine from pyruvate: step 3/4. In terms of biological role, functions in the biosynthesis of branched-chain amino acids. Catalyzes the dehydration of (2R,3R)-2,3-dihydroxy-3-methylpentanoate (2,3-dihydroxy-3-methylvalerate) into 2-oxo-3-methylpentanoate (2-oxo-3-methylvalerate) and of (2R)-2,3-dihydroxy-3-methylbutanoate (2,3-dihydroxyisovalerate) into 2-oxo-3-methylbutanoate (2-oxoisovalerate), the penultimate precursor to L-isoleucine and L-valine, respectively. In Prochlorococcus marinus (strain SARG / CCMP1375 / SS120), this protein is Dihydroxy-acid dehydratase.